Consider the following 713-residue polypeptide: Probable muscarinic acetylcholine receptor gar-1 (713 aa).

Topologically, residues 1–20 (MPNYTVPPDPADTSWDSPYS) are extracellular. A glycan (N-linked (GlcNAc...) asparagine) is linked at Asn3. Residues 21–41 (IPVQIVVWIIIIVLSLETIIG) form a helical membrane-spanning segment. The Cytoplasmic portion of the chain corresponds to 42–66 (NAMVVMAYRIERNISKQVSNRYIVS). The chain crosses the membrane as a helical span at residues 67 to 87 (LAISDLIIGIEGFPFFTVYVL). Topologically, residues 88 to 101 (NGDRWPLGWVACQT) are extracellular. Cys99 and Cys180 are oxidised to a cystine. Residues 102 to 122 (WLFLDYTLCLVSILTVLLITA) form a helical membrane-spanning segment. Residues 123 to 144 (DRYLSVCHTAKYLKWQSPTKTQ) are Cytoplasmic-facing. Residues 145–165 (LLIVMSWLLPAIIFGIMIYGW) traverse the membrane as a helical segment. Residues 166–189 (QAMTGQSTSMSGAECSAPFLSNPY) lie on the Extracellular side of the membrane. Residues 190 to 210 (VNMGMYVAYYWTTLVAMLILY) form a helical membrane-spanning segment. Over 211–633 (KGIHQAAKNL…QTKAEKRAHK (423 aa)) the chain is Cytoplasmic. Disordered regions lie at residues 256-350 (KEKA…SRRC), 381-403 (SRYS…VEKA), 427-475 (KNTD…KQAE), and 515-585 (LIRR…TDTF). 2 stretches are compositionally biased toward polar residues: residues 266–275 (SGYTSNQAGD) and 287–315 (PETS…NDQN). 2 stretches are compositionally biased toward basic and acidic residues: residues 320–333 (EEER…RESN) and 393–403 (HENDEKEVEKA). The segment covering 429–439 (TDSNNDSDTTS) has biased composition (low complexity). Residues 444-457 (RSRKYKKNKRPRSS) are compositionally biased toward basic residues. Over residues 557–571 (LTVNNENRGETSSQP) the composition is skewed to polar residues. The chain crosses the membrane as a helical span at residues 634–656 (AFRTITFIVGFFAILWSPYYIMA). The Extracellular portion of the chain corresponds to 657-670 (TVYGFCKGECIPSF). The chain crosses the membrane as a helical span at residues 671–693 (LYTLSYYMCYLNSSGNPFAYALA). Topologically, residues 694-713 (NRQFRSAFMRMFRGNFNKVA) are cytoplasmic.

Belongs to the G-protein coupled receptor 1 family. Muscarinic acetylcholine receptor subfamily. As to expression, expressed in head region of the larva. In adults, expression is seen in the periventricularis magnocellularis (PVM) neuron.

The protein localises to the cell membrane. Its function is as follows. The muscarinic acetylcholine receptor mediates various cellular responses, including inhibition of adenylate cyclase, breakdown of phosphoinositides and modulation of potassium channels through the action of G proteins. Primary transducing effect is Pi turnover. The protein is Probable muscarinic acetylcholine receptor gar-1 (gar-1) of Caenorhabditis elegans.